The sequence spans 363 residues: Pyrimidine monooxygenase RutA (363 aa).

Residues 49-50 (IK), Asn115, Glu124, 140-141 (RY), and Ser190 each bind FMN.

This sequence belongs to the NtaA/SnaA/DszA monooxygenase family. RutA subfamily.

The enzyme catalyses uracil + FMNH2 + NADH + O2 = (Z)-3-ureidoacrylate + FMN + NAD(+) + H2O + H(+). It carries out the reaction thymine + FMNH2 + NADH + O2 = (Z)-2-methylureidoacrylate + FMN + NAD(+) + H2O + H(+). In terms of biological role, catalyzes the pyrimidine ring opening between N-3 and C-4 by an unusual flavin hydroperoxide-catalyzed mechanism, adding oxygen atoms in the process to yield ureidoacrylate peracid, that immediately reacts with FMN forming ureidoacrylate and FMN-N(5)-oxide. The FMN-N(5)-oxide reacts spontaneously with NADH to produce FMN. Requires the flavin reductase RutF to regenerate FMN in vivo. This chain is Pyrimidine monooxygenase RutA, found in Klebsiella variicola (strain At-22).